The chain runs to 326 residues: UDP-N-acetylglucosamine transporter (326 aa).

8 helical membrane passes run 4–24, 38–58, 136–156, 174–194, 212–232, 244–264, 269–289, and 293–313; these read NLKY…VLTM, LSST…ILLV, LGVY…FVQW, FVGL…GVYF, LGFF…GELV, LTWI…AVIK, ILKG…SYFW, and FVPT…TFLY.

Belongs to the nucleotide-sugar transporter family. SLC35A subfamily. As to quaternary structure, interacts with SLC35A2; the interaction is reduced in the presence of SLC35A4. Found in a complex with SLC35A2 and SLC35A4. Interacts with MGAT4B. Post-translationally, O-Glcnacylation regulates the stability of SLC35A3 and the specific complex formation with MGAT4B.

It is found in the golgi apparatus membrane. It carries out the reaction UMP(out) + UDP-N-acetyl-alpha-D-glucosamine(in) = UMP(in) + UDP-N-acetyl-alpha-D-glucosamine(out). Its function is as follows. Transports diphosphate-N-acetylglucosamine (UDP-GlcNAc) from the cytosol into the lumen of the Golgi apparatus, functioning as an antiporter that exchanges UDP-N-acetyl-alpha-D-glucosamine for UMP. May supply UDP-GlcNAc as substrate for Golgi-resident glycosyltransferases that generate highly branched, multiantennary complex N-glycans and keratan sulfate. However, the exact role of SLC35A3 still needs to be elucidated, it could be a member of a catalytically more efficient multiprotein complex rather than function independently as a single transporter. This chain is UDP-N-acetylglucosamine transporter (SLC35A3), found in Bos taurus (Bovine).